Reading from the N-terminus, the 1063-residue chain is Structural polyprotein (1063 aa).

The disordered stretch occupies residues 1-131 (MASTTPITME…LGPPTNPFQA (131 aa)). The human C1QBP/SF2P32-binding stretch occupies residues 30–69 (GASQSRRPRPPRQRDSSTSGDDSGRDSGGPRRRRGNRGRG). Residue serine 46 is modified to Phosphoserine; by host. A compositionally biased stretch (basic and acidic residues) spans 70–87 (QLRDWSRAPPPPEERQES). The span at 93–107 (APKPSRAPPQQPQPP) shows a compositional bias: pro residues. Cysteine 153 and cysteine 197 are joined by a disulfide. A functions as E2 signal peptide region spans residues 279-300 (GAPQAFLAGLLLAAVAVGTARA). Residues 301–534 (GLQPRADMAA…LWLATANALS (234 aa)) lie on the Extracellular side of the membrane. 4 N-linked (GlcNAc...) asparagine; by host glycosylation sites follow: asparagine 353, asparagine 371, asparagine 410, and asparagine 429. Residues 535 to 555 (LDHALAAFVLLVPWVLIFMVC) form a helical membrane-spanning segment. Residues 556–582 (RRACRRRGAAAALTAVVLQGYNPPAYG) are Cytoplasmic-facing. The functions as E1 signal peptide stretch occupies residues 563–582 (GAAAALTAVVLQGYNPPAYG). Topologically, residues 583 to 1028 (EEAFTYLCTA…QTWAEWAAAH (446 aa)) are extracellular. Intrachain disulfides connect cysteine 590–cysteine 595, cysteine 619–cysteine 824, cysteine 641–cysteine 653, cysteine 699–cysteine 712, cysteine 758–cysteine 767, cysteine 807–cysteine 817, cysteine 931–cysteine 934, and cysteine 950–cysteine 983. N-linked (GlcNAc...) asparagine; by host glycosylation occurs at asparagine 658. 2 residues coordinate Ca(2+): asparagine 670 and alanine 671. The Ca(2+) site is built by aspartate 718 and threonine 719. 2 N-linked (GlcNAc...) asparagine; by host glycosylation sites follow: asparagine 759 and asparagine 791. Residues threonine 1011 and threonine 1012 are each glycosylated (O-linked (GalNAc...) threonine; by host). The chain crosses the membrane as a helical span at residues 1029–1049 (WWQLTLGAICALLLAGLLACC). At 1050-1063 (AKCLYYLRGAIAPR) the chain is on the extracellular side.

Homodimer; further assembles into homooligomer. Interacts with human C1QBP. Interacts (via N-terminus) with protease/methyltransferase p150. As to quaternary structure, heterodimer with spike glycoprotein E2. In terms of assembly, heterodimer with spike glycoprotein E1. Structural polyprotein: Specific enzymatic cleavages in vivo yield mature proteins. Two signal peptidase-mediated cleavages within the polyprotein produce the structural proteins capsid, E2, and E1. The E2 signal peptide remains attached to the C-terminus of the capsid protein after cleavage by the signal peptidase. Another signal peptide at E2 C-terminus directs E1 to the ER, with a similar mechanism. In terms of processing, contains three N-linked oligosaccharides. Post-translationally, capsid is phosphorylated on Ser-46 by host. This phosphorylation negatively regulates capsid protein RNA-binding activity. Dephosphorylated by human PP1A.

The protein localises to the virion. It localises to the host cytoplasm. It is found in the host mitochondrion. The protein resides in the virion membrane. Its subcellular location is the host Golgi apparatus membrane. Capsid protein interacts with genomic RNA and assembles into icosahedric core particles 65-70 nm in diameter. The resulting nucleocapsid eventually associates with the cytoplasmic domain of E2 at the cell membrane, leading to budding and formation of mature virions from host Golgi membranes. Phosphorylation negatively regulates RNA-binding activity, possibly delaying virion assembly during the viral replication phase. Capsid protein dimerizes and becomes disulfide-linked in the virion. Modulates genomic RNA replication. Modulates subgenomic RNA synthesis by interacting with human C1QBP/SF2P32. Induces both perinuclear clustering of mitochondria and the formation of electron-dense intermitochondrial plaques, both hallmarks of rubella virus infected cells. Induces apoptosis when expressed in transfected cells. In terms of biological role, responsible for viral attachment to target host cell, by binding to the cell receptor. Its transport to the plasma membrane depends on interaction with E1 protein. The surface glycoproteins display an irregular helical organization and a pseudo-tetrameric inner nucleocapsid arrangement. Its function is as follows. Class II viral fusion protein. Fusion activity is inactive as long as E1 is bound to E2 in mature virion. After virus attachment to target cell and clathrin-mediated endocytosis, acidification of the endosome would induce dissociation of E1/E2 heterodimer and concomitant trimerization of the E1 subunits. This E1 homotrimer is fusion active, and promotes release of viral nucleocapsid in cytoplasm after endosome and viral membrane fusion. The cytoplasmic tail of spike glycoprotein E1 modulates virus release. The surface glycoproteins display an irregular helical organization and a pseudo-tetrameric inner nucleocapsid arrangement. In Rubella virus (strain TO-336 vaccine) (RUBV), this protein is Structural polyprotein.